The chain runs to 732 residues: Lanosterol synthase (732 aa).

An N-acetylthreonine modification is found at Thr-2. PFTB repeat units lie at residues 77 to 121 (ALNG…PLPA), 124 to 165 (REEI…RILG), 424 to 468 (PDNP…LLLQ), 483 to 528 (LCDA…MIDY), 560 to 600 (LTQG…ACMG), 612 to 653 (VSRA…HNTC), and 670 to 712 (QERG…NIFP). Asp-455 (proton donor) is an active-site residue.

Belongs to the terpene cyclase/mutase family. Monomer. As to expression, widely expressed. Expressed in the hair bulb, the outer root sheath and hair matrix of the hair follicle epithelium. Also detected in dermal papilla, epidermis, sweat glands, sebaceous glands, and blood vessels.

It is found in the endoplasmic reticulum membrane. The catalysed reaction is (S)-2,3-epoxysqualene = lanosterol. It participates in terpene metabolism; lanosterol biosynthesis; lanosterol from farnesyl diphosphate: step 3/3. In terms of biological role, key enzyme in the cholesterol biosynthesis pathway. Catalyzes the cyclization of (S)-2,3 oxidosqualene to lanosterol, a reaction that forms the sterol nucleus. Through the production of lanosterol may regulate lens protein aggregation and increase transparency. This Homo sapiens (Human) protein is Lanosterol synthase (LSS).